We begin with the raw amino-acid sequence, 493 residues long: Leucine-rich repeat-containing protein 14 (493 aa).

The LRR 1; degenerate repeat unit spans residues 111-146; the sequence is KHTLRVLDMTGLLDDGVEQDPGTMSMWDCTAAVART. An LRR 2; degenerate repeat occupies 194-218; it reads RLCCRDLRAEDLPMRNTVALLQLLD. One copy of the LRR 3; degenerate repeat lies at 219 to 246; that stretch reads AGCLRRVDLRFNNLGLRGLSVIIPHVAR. The LRR 4; degenerate repeat unit spans residues 247–282; that stretch reads FQHLASLRLHYVHGDSRQPSVDGEDNFRYFLAQMGR. LRR repeat units lie at residues 283–307, 308–339, 340–360, 364–391, and 392–416; these read FTCL…LSTL, QSPL…VHLK, KLDL…QGLL, AATL…VLTR, and CASL…LLRD.

Belongs to the PRAME family. LRRC14 subfamily. In terms of assembly, interacts with IKBKB; disrupts IKBKB-IKBKG interaction preventing I-kappa-B-kinase (IKK) core complex formation and leading to a decrease of IKBKB phosphorylation and NF-kappaB activation. Interacts with CHUK.

It localises to the cytoplasm. In terms of biological role, negatively regulates Toll-like receptor-mediated NF-kappa-B signaling by disrupting IKK core complex formation through interaction with IKBKB. This is Leucine-rich repeat-containing protein 14 from Bos taurus (Bovine).